Consider the following 145-residue polypeptide: Early nodulin-like protein 21 (145 aa).

The first 17 residues, 1–17, serve as a signal peptide directing secretion; the sequence is MFLWLVIVLTISASVSS. A Phytocyanin domain is found at 18 to 116; sequence YEHKLNWVVP…GQKMIVEVIS (99 aa). Residues N30 and N71 are each glycosylated (N-linked (GlcNAc...) asparagine). The cysteines at positions 70 and 104 are disulfide-linked. S116 is lipidated: GPI-anchor amidated serine. Residues 117–145 constitute a propeptide, removed in mature form; it reads RDHTTTSAAPPAAFAVLLCFFSLSLYFVA.

It belongs to the early nodulin-like (ENODL) family. Mostly expressed in leaves and flowers, and, to a lower extent, in roots and stems, but barely in seedlings and seeds.

The protein localises to the cell membrane. Functionally, may act as a carbohydrate transporter. The chain is Early nodulin-like protein 21 from Arabidopsis thaliana (Mouse-ear cress).